The chain runs to 348 residues: Phenylalanine--tRNA ligase alpha subunit (348 aa).

Glu-259 is a Mg(2+) binding site.

This sequence belongs to the class-II aminoacyl-tRNA synthetase family. Phe-tRNA synthetase alpha subunit type 1 subfamily. Tetramer of two alpha and two beta subunits. Mg(2+) is required as a cofactor.

Its subcellular location is the cytoplasm. It carries out the reaction tRNA(Phe) + L-phenylalanine + ATP = L-phenylalanyl-tRNA(Phe) + AMP + diphosphate + H(+). The chain is Phenylalanine--tRNA ligase alpha subunit from Levilactobacillus brevis (strain ATCC 367 / BCRC 12310 / CIP 105137 / JCM 1170 / LMG 11437 / NCIMB 947 / NCTC 947) (Lactobacillus brevis).